The sequence spans 182 residues: MEPTASGIFCNRMLSMVNSEDVNAIIQAQRHMLDRFEKTNEMLINFNGLSNVRLQQMNEHFLMHTRTLIEMKKDLDSIFRRIRALKGKVAKQYPEAFSNVSESSNLEDDDDEFDPIPASVATITTTATSEQSTESCDTSPDVISPTISCCSEDPSQEHTDTPTSDSHEQPVLRDEGPDSADI.

A compositionally biased stretch (low complexity) spans 124–135 (TTTATSEQSTES). Positions 124–182 (TTTATSEQSTESCDTSPDVISPTISCCSEDPSQEHTDTPTSDSHEQPVLRDEGPDSADI) are disordered. Basic and acidic residues predominate over residues 155–176 (SQEHTDTPTSDSHEQPVLRDEG).

It belongs to the KXD1 family. Associates with the BLOC-1 complex.

Its subcellular location is the lysosome membrane. Its function is as follows. As part of a BORC-like complex may play a role in lysosomes movement and localization at the cell periphery. Associated with the cytosolic face of lysosomes, this complex may couple lysosomes to microtubule plus-end-directed kinesin motor. May also be involved in the biogenesis of lysosome-related organelles such as melanosomes. This is KxDL motif-containing protein 1 (kxd1) from Danio rerio (Zebrafish).